Reading from the N-terminus, the 310-residue chain is tRNA dimethylallyltransferase (310 aa).

14–21 (GPTASGKT) contributes to the ATP binding site. 16–21 (TASGKT) contacts substrate. Interaction with substrate tRNA stretches follow at residues 39 to 42 (DSAL), 163 to 167 (QRLSR), and 244 to 249 (RCVGYR).

It belongs to the IPP transferase family. Monomer. It depends on Mg(2+) as a cofactor.

It catalyses the reaction adenosine(37) in tRNA + dimethylallyl diphosphate = N(6)-dimethylallyladenosine(37) in tRNA + diphosphate. In terms of biological role, catalyzes the transfer of a dimethylallyl group onto the adenine at position 37 in tRNAs that read codons beginning with uridine, leading to the formation of N6-(dimethylallyl)adenosine (i(6)A). In Aeromonas salmonicida (strain A449), this protein is tRNA dimethylallyltransferase.